A 2800-amino-acid polypeptide reads, in one-letter code: Probable serine/threonine-protein kinase roco5 (2800 aa).

Positions 1-61 are enriched in basic and acidic residues; it reads MEVIKKEKKD…EKEKDKEKDG (61 aa). Disordered stretches follow at residues 1–92, 123–225, and 417–437; these read MEVI…SAQS, TTTT…SPVD, and GINS…SSGI. Pro residues predominate over residues 77-86; the sequence is PTPPPPPPPS. Low complexity-rich tracts occupy residues 123–134 and 143–170; these read TTTTTTTTSSNN and NNNT…SSNN. The segment covering 176–190 has biased composition (polar residues); that stretch reads INVTSLDSGGNNNAS. The span at 194–218 shows a compositional bias: basic and acidic residues; that stretch reads ISNEHSPKNRKEKEKEKDKDNKEDS. The DH domain maps to 227–508; the sequence is NRRKLVEGFM…VQVVKDIVNE (282 aa). Over residues 417-429 the composition is skewed to low complexity; sequence GINSANSNNNNNN. The PH domain occupies 540 to 649; the sequence is KFLKEGILIE…WFQVLSQASL (110 aa). 4 LRR repeats span residues 777-800, 805-832, 834-856, and 861-885; these read NKSI…ALGD, NHSL…GILS, PSIT…HISK, and NQTL…IIDQ. Residues 926–946 are disordered; that stretch reads KQLQVNQKSTTPSTSTSTTSS. Over residues 934-946 the composition is skewed to low complexity; sequence STTPSTSTSTTSS. 10 LRR repeats span residues 971 to 984, 985 to 1007, 1008 to 1031, 1033 to 1056, 1058 to 1077, 1078 to 1101, 1128 to 1151, 1152 to 1174, 1175 to 1197, and 1199 to 1222; these read LNKL…SRRI, SDLK…ILKE, LKNL…ISEM, ELKL…TLCK, NHLD…SLSQ, LVNL…IFTR, AIKA…IGSI, SSLI…IGKL, SSLQ…LSQL, and TLKV…KISI. The region spanning 1244–1464 is the Roc domain; sequence KEKPCMRMKL…NHIVKLGKAE (221 aa). GTP is bound by residues 1257–1264, 1348–1352, and 1407–1410; these read GQENVGKT, DFAGQ, and THLD. In terms of domain architecture, COR 1 spans 1473 to 1604; that stretch reads RSYFQLENLI…KFEIVHPLPD (132 aa). 2 disordered regions span residues 1605 to 1665 and 1688 to 1711; these read PKAT…SLLN and DQST…FSDS. 3 stretches are compositionally biased toward low complexity: residues 1610 to 1645, 1653 to 1665, and 1688 to 1707; these read SSSS…SSTT, RTNS…SLLN, and DQST…SSNN. The COR 2 domain maps to 1717-1790; that stretch reads KSSTKHLVPI…VKEFWKNGLL (74 aa). The span at 1886–2008 shows a compositional bias: low complexity; sequence SQQQHHQQQQ…LNPDSTSSSN (123 aa). 2 disordered regions span residues 1886 to 2011 and 2050 to 2070; these read SQQQ…NETS and RNTN…SSIV. The segment covering 2050-2059 has biased composition (polar residues); the sequence is RNTNKPKING. The region spanning 2175-2440 is the Protein kinase domain; the sequence is LEIIEKVGEG…PTFIDIHSRL (266 aa). ATP-binding positions include 2181 to 2189 and Lys-2202; that span reads VGEGGFGIV. Catalysis depends on Asp-2300, which acts as the Proton acceptor. Low complexity-rich tracts occupy residues 2452–2490, 2583–2654, 2669–2685, and 2694–2704; these read TTTN…GTTS, LKTP…SPIS, TTQT…PNPT, and SSLSSNSINKP. Disordered regions lie at residues 2452–2498 and 2544–2800; these read TTTN…HPQL and AGGN…AIPK. A compositionally biased stretch (pro residues) spans 2705–2723; the sequence is PSKPLPTPGGVTSPPPPPT. Residues 2730–2756 show a composition bias toward polar residues; it reads IKFNSISAGNKTIGQSSTLPSSTLKQF. Low complexity predominate over residues 2757 to 2787; sequence TANNNTSPSGSSSLPNSTVSSPSSSFLLRPT.

It belongs to the protein kinase superfamily. TKL Ser/Thr protein kinase family. ROCO subfamily.

The catalysed reaction is L-seryl-[protein] + ATP = O-phospho-L-seryl-[protein] + ADP + H(+). It catalyses the reaction L-threonyl-[protein] + ATP = O-phospho-L-threonyl-[protein] + ADP + H(+). Its function is as follows. May act as a serine/threonine-protein kinase and guanine-nucleotide releasing factor. The chain is Probable serine/threonine-protein kinase roco5 (roco5) from Dictyostelium discoideum (Social amoeba).